A 629-amino-acid chain; its full sequence is Methionine--tRNA ligase (629 aa).

The 'HIGH' region signature appears at 10–20 (YYVNSEPHIGS). Cys-125, Cys-128, Cys-146, and Cys-149 together coordinate Zn(2+). The short motif at 297-301 (KISKS) is the 'KMSKS' region element. Position 300 (Lys-300) interacts with ATP. The region spanning 529–629 (DFSKVDLRIA…GEITPGAKVS (101 aa)) is the tRNA-binding domain.

Belongs to the class-I aminoacyl-tRNA synthetase family. MetG type 2A subfamily. Homodimer. It depends on Zn(2+) as a cofactor.

Its subcellular location is the cytoplasm. It catalyses the reaction tRNA(Met) + L-methionine + ATP = L-methionyl-tRNA(Met) + AMP + diphosphate. Its function is as follows. Is required not only for elongation of protein synthesis but also for the initiation of all mRNA translation through initiator tRNA(fMet) aminoacylation. The chain is Methionine--tRNA ligase (metG) from Thermotoga maritima (strain ATCC 43589 / DSM 3109 / JCM 10099 / NBRC 100826 / MSB8).